The following is a 141-amino-acid chain: Large-conductance mechanosensitive channel (141 aa).

The next 3 membrane-spanning stretches (helical) occupy residues 16–36 (VIDL…VDSV), 40–60 (LIMP…MFIV), and 86–106 (GNFL…FLMV).

Belongs to the MscL family. Homopentamer.

The protein localises to the cell inner membrane. Channel that opens in response to stretch forces in the membrane lipid bilayer. May participate in the regulation of osmotic pressure changes within the cell. This is Large-conductance mechanosensitive channel from Cupriavidus necator (strain ATCC 17699 / DSM 428 / KCTC 22496 / NCIMB 10442 / H16 / Stanier 337) (Ralstonia eutropha).